The sequence spans 690 residues: Probable tape measure protein (690 aa).

This sequence belongs to the Mulikevirus tape measure protein family.

The protein localises to the host cytoplasm. In terms of biological role, serves as a base for tail tube protein polymerization and acts as a template for tail length determination. Might remain in the tube and be ejected from the tail prior to the DNA during DNA ejection (Potential). This Enterobacteriaceae (Bacteriophage Mu) protein is Probable tape measure protein.